Here is a 497-residue protein sequence, read N- to C-terminus: Chlorophyllide reductase 52.5 kDa chain (497 aa).

The next 3 helical transmembrane spans lie at 65-82 (VATVLCGSACCVYGLSFI), 126-142 (AIVVINLCVPTASGVPL), and 216-233 (MVIGAMLAPMGLAVGPTV).

The protein belongs to the BchN/ChlN family. In terms of assembly, chlorophyllide reductase is composed of three subunits; BchX, BchY and BchZ. Forms a heterodimer of one BchY and one BchZ subunit.

The protein localises to the cell membrane. The catalysed reaction is 3-deacetyl-3-vinylbacteriochlorophyllide a + 2 oxidized [2Fe-2S]-[ferredoxin] + ADP + phosphate = chlorophyllide a + 2 reduced [2Fe-2S]-[ferredoxin] + ATP + H2O + H(+). It carries out the reaction bacteriochlorophyllide a + 2 oxidized [2Fe-2S]-[ferredoxin] + ADP + phosphate = 3-acetyl-3-devinylchlorophyllide a + 2 reduced [2Fe-2S]-[ferredoxin] + ATP + H2O + H(+). It catalyses the reaction 3-deacetyl-3-(1-hydroxyethyl)bacteriochlorophyllide a + 2 oxidized [2Fe-2S]-[ferredoxin] + ADP + phosphate = 3-devinyl-3-(1-hydroxyethyl)chlorophyllide a + 2 reduced [2Fe-2S]-[ferredoxin] + ATP + H2O + H(+). It participates in porphyrin-containing compound metabolism; bacteriochlorophyll biosynthesis (light-independent). Its function is as follows. Converts chlorophylls (Chl) into bacteriochlorophylls (BChl) by reducing ring B of the tetrapyrrole. The polypeptide is Chlorophyllide reductase 52.5 kDa chain (bchY) (Rhodobacter capsulatus (strain ATCC BAA-309 / NBRC 16581 / SB1003)).